The sequence spans 574 residues: Proline--tRNA ligase (574 aa).

Belongs to the class-II aminoacyl-tRNA synthetase family. ProS type 1 subfamily. In terms of assembly, homodimer.

The protein localises to the cytoplasm. It catalyses the reaction tRNA(Pro) + L-proline + ATP = L-prolyl-tRNA(Pro) + AMP + diphosphate. Its function is as follows. Catalyzes the attachment of proline to tRNA(Pro) in a two-step reaction: proline is first activated by ATP to form Pro-AMP and then transferred to the acceptor end of tRNA(Pro). As ProRS can inadvertently accommodate and process non-cognate amino acids such as alanine and cysteine, to avoid such errors it has two additional distinct editing activities against alanine. One activity is designated as 'pretransfer' editing and involves the tRNA(Pro)-independent hydrolysis of activated Ala-AMP. The other activity is designated 'posttransfer' editing and involves deacylation of mischarged Ala-tRNA(Pro). The misacylated Cys-tRNA(Pro) is not edited by ProRS. In Aeromonas hydrophila subsp. hydrophila (strain ATCC 7966 / DSM 30187 / BCRC 13018 / CCUG 14551 / JCM 1027 / KCTC 2358 / NCIMB 9240 / NCTC 8049), this protein is Proline--tRNA ligase.